A 305-amino-acid polypeptide reads, in one-letter code: Glycine--tRNA ligase alpha subunit (305 aa).

The protein belongs to the class-II aminoacyl-tRNA synthetase family. Tetramer of two alpha and two beta subunits.

The protein localises to the cytoplasm. The catalysed reaction is tRNA(Gly) + glycine + ATP = glycyl-tRNA(Gly) + AMP + diphosphate. This is Glycine--tRNA ligase alpha subunit from Streptococcus pyogenes serotype M2 (strain MGAS10270).